We begin with the raw amino-acid sequence, 419 residues long: Peptide chain release factor subunit 1 (419 aa).

The protein belongs to the eukaryotic release factor 1 family. In terms of assembly, heterodimer of two subunits, one of which binds GTP.

It localises to the cytoplasm. Directs the termination of nascent peptide synthesis (translation) in response to the termination codons UAA, UAG and UGA. This chain is Peptide chain release factor subunit 1, found in Methanococcus maripaludis (strain C6 / ATCC BAA-1332).